The following is a 178-amino-acid chain: Vegetative protein (178 aa).

Disordered stretches follow at residues 67-102 and 138-158; these read AGRRGPGRPPAARSAVTAAPAAVGGKRRGRKPAAAG and NRRPSDWKDYADPDSVDDIKL. The span at 76 to 90 shows a compositional bias: low complexity; it reads PAARSAVTAAPAAVG.

In Myxococcus xanthus, this protein is Vegetative protein (vegA).